A 209-amino-acid polypeptide reads, in one-letter code: Pyroglutamyl-peptidase 1 (209 aa).

Residues Glu85, Cys149, and His168 contribute to the active site.

The protein belongs to the peptidase C15 family. In terms of assembly, monomer.

Its subcellular location is the cytoplasm. It catalyses the reaction Release of an N-terminal pyroglutamyl group from a polypeptide, the second amino acid generally not being Pro.. Its activity is regulated as follows. Inhibited by transition metal ions including Ni(2+), Zn(2+), and Cu(2+) and by sulfhydryl-blocking agents. Removes 5-oxoproline from various penultimate amino acid residues except L-proline. This Homo sapiens (Human) protein is Pyroglutamyl-peptidase 1 (PGPEP1).